Reading from the N-terminus, the 313-residue chain is Malate dehydrogenase (313 aa).

NAD(+)-binding positions include 11 to 16 and D35; that span reads GAGNIG. Substrate contacts are provided by R84 and R90. NAD(+) contacts are provided by residues N97 and 120–122; that span reads VTN. Substrate is bound by residues N122 and R153. H177 functions as the Proton acceptor in the catalytic mechanism.

It belongs to the LDH/MDH superfamily. MDH type 3 family.

The enzyme catalyses (S)-malate + NAD(+) = oxaloacetate + NADH + H(+). Its function is as follows. Catalyzes the reversible oxidation of malate to oxaloacetate. The chain is Malate dehydrogenase from Ehrlichia canis (strain Jake).